A 196-amino-acid chain; its full sequence is Small ribosomal subunit protein uS4c (196 aa).

Positions 16–36 (GALPGLTRKTPKSGSNLKKKF) are disordered. An S4 RNA-binding domain is found at 89–169 (MRLDNILFRL…LPKHLTIDTL (81 aa)).

It belongs to the universal ribosomal protein uS4 family. Part of the 30S ribosomal subunit. Contacts protein S5. The interaction surface between S4 and S5 is involved in control of translational fidelity.

It localises to the plastid. The protein localises to the chloroplast. One of the primary rRNA binding proteins, it binds directly to 16S rRNA where it nucleates assembly of the body of the 30S subunit. Its function is as follows. With S5 and S12 plays an important role in translational accuracy. This Brachypodium pinnatum (Tor grass) protein is Small ribosomal subunit protein uS4c (rps4).